The sequence spans 3411 residues: Genome polyprotein (3411 aa).

Residues 1 to 104 (MSGRKAQGKT…LSSRKRRSHD (104 aa)) are Cytoplasmic-facing. The hydrophobic; homodimerization of capsid protein C stretch occupies residues 38 to 72 (PGPSRGVQGFIFFFLFNILTGKKITAHLKRLWKML). The propeptide at 102 to 121 (SHDVLTVQFLILGMLLMTGG) is ER anchor for the capsid protein C, removed in mature form by serine protease NS3. Residues 105–125 (VLTVQFLILGMLLMTGGVTLV) form a helical membrane-spanning segment. Residues 126-244 (RKNRWLLLNV…GERQLQKIER (119 aa)) lie on the Extracellular side of the membrane. 2 N-linked (GlcNAc...) asparagine; by host glycosylation sites follow: Asn-134 and Asn-150. The chain crosses the membrane as a helical span at residues 245–265 (WFVRNPFFAVTALTIAYLVGS). The Cytoplasmic segment spans residues 266-270 (NMTQR). The chain crosses the membrane as a helical span at residues 271–285 (VVIALLVLAVGPAYS). At 286–730 (AHCIGITDRD…TVFGSAFQGL (445 aa)) the chain is on the extracellular side. 8 disulfide bridges follow: Cys-288-Cys-315, Cys-345-Cys-401, Cys-345-Cys-406, Cys-359-Cys-390, Cys-377-Cys-401, Cys-377-Cys-406, Cys-467-Cys-568, and Cys-585-Cys-615. The tract at residues 383–396 (DRGWGNGCGLFGKG) is fusion peptide. A helical membrane pass occupies residues 731–751 (FGGLNWITKVIIGAVLIWVGI). The Extracellular portion of the chain corresponds to 752-757 (NTRNMT). The chain crosses the membrane as a helical span at residues 758–778 (MSMSMILVGVIMMFLSLGVGA). Topologically, residues 779–1132 (DQGCAINFAK…LVRSWVTAGE (354 aa)) are extracellular. 6 cysteine pairs are disulfide-bonded: Cys-782-Cys-793, Cys-833-Cys-921, Cys-957-Cys-1002, Cys-1058-Cys-1107, Cys-1069-Cys-1091, and Cys-1090-Cys-1094. N-linked (GlcNAc...) asparagine; by host glycans are attached at residues Asn-908 and Asn-986. Residues 1133 to 1153 (IHAVPFGLVSMMIALEVVLRK) traverse the membrane as a helical segment. Residues 1154–1201 (RQGPKQMLVGGVVLLGAMLVGQVTLLDLLKLTVAVGLHFHEMNNGGDA) are Cytoplasmic-facing. Residues 1202–1222 (MYMALIAAFSVRPGLLIGFGL) traverse the membrane as a helical segment. The Lumenal segment spans residues 1223–1287 (RTLWSPRERL…ILPLMALLTP (65 aa)). Residues 1288–1308 (VTMAEVRLATMLFCTVVIIGV) form a helical membrane-spanning segment. Residues 1309-1355 (LYQNSKDTSMQKTIPLVALTLTSYLGLTQPFLGLCAFLATRIFGRRS) are Cytoplasmic-facing. The chain crosses the membrane as a helical span at residues 1356–1376 (IPVNEALAAAGLVGVLAGLAF). At 1377–1378 (QE) the chain is on the lumenal side. Residues 1379–1399 (MENFLGPIAVGGILMMLVSVA) traverse the membrane as a helical segment. Residues 1400 to 1456 (GRVDGLELKKLGEVAWEEEAEISGSSARYDVALSEQGEFKLLSEEKVPWDQVVMTSL) lie on the Cytoplasmic side of the membrane. The tract at residues 1407–1446 (LKKLGEVAWEEEAEISGSSARYDVALSEQGEFKLLSEEKV) is interacts with and activates NS3 protease. An intramembrane region (helical) is located at residues 1457 to 1477 (ALVGAAIHPFALLLVLAGWLF). Residues 1478–2157 (HVRGARRSGD…RNALSMMPEA (680 aa)) lie on the Cytoplasmic side of the membrane. A Peptidase S7 domain is found at 1485-1665 (SGDVLWDIPT…EVKEEGKEEL (181 aa)). Active-site charge relay system; for serine protease NS3 activity residues include His-1537, Asp-1561, and Ser-1622. In terms of domain architecture, Helicase ATP-binding spans 1669–1825 (PTMLKKGKTT…HSNGEIEDVQ (157 aa)). Residues 1673–1676 (KKGK) are important for RNA-binding. 1682-1689 (FHPGAGKT) is a binding site for ATP. Residues 1773 to 1776 (DEAH) carry the DEAH box motif. A Helicase C-terminal domain is found at 1820 to 1997 (EIEDVQTDIP…VRGGMVAPLY (178 aa)). Lys-1877 is subject to N6-acetyllysine; by host. The disordered stretch occupies residues 1942-1961 (AAQRRGRIGRNPNRDGDSYY). The chain crosses the membrane as a helical span at residues 2158 to 2178 (MTIVMLFILAGLLTSGMVIFF). Over 2179–2186 (MSPKGISR) the chain is Lumenal. Positions 2187-2207 (MSMAMGTMAGCGYLMFLGGVK) form an intramembrane region, helical. Residues 2208–2209 (PT) lie on the Lumenal side of the membrane. The chain crosses the membrane as a helical span at residues 2210 to 2230 (HISYIMLIFFVLMVVVIPEPG). Topologically, residues 2231-2241 (QQRSIQDNQVA) are cytoplasmic. The helical transmembrane segment at 2242–2262 (FLIIGILTLVSVVAANELGML) threads the bilayer. Over 2263–2293 (EKTKEDLFGKKNSIPSSASPWSWPDLDLKPG) the chain is Lumenal. An intramembrane region (helical) is located at residues 2294-2314 (AAWTVYVGIVTMLSPMLHHWI). At 2315–2360 (KVEYGNLSLSGIAQSASVLSFMDKGIPFMKMNISVIMLLISGWNSI) the chain is on the lumenal side. Residues 2361–2380 (TVMPLLCGIGCAMLHWSLIL) form a helical membrane-spanning segment. At 2381–2421 (PGIKAQQSKLAQRRVFHGVAKNPVVDGNPTVDIEEAPEMPV) the chain is on the cytoplasmic side. The helical transmembrane segment at 2422–2442 (LYEKKLALYLLLALSLASVAM) threads the bilayer. Residues 2443 to 2445 (CRT) are Lumenal-facing. The helical transmembrane segment at 2446 to 2466 (PFSLAEGIVLASAALGPLIEG) threads the bilayer. Residues 2467–3411 (NTSLLWNGPM…DADLQPGELI (945 aa)) are Cytoplasmic-facing. The mRNA cap 0-1 NS5-type MT domain occupies 2507–2771 (GTANGKTLGE…DVTLPIGTRS (265 aa)). S-adenosyl-L-methionine is bound at residue Ser-2562. The residue at position 2562 (Ser-2562) is a Phosphoserine. Residue Lys-2567 is the For 2'-O-MTase activity of the active site. Residues Gly-2592, Trp-2593, Thr-2610, Leu-2611, Asp-2637, and Ile-2638 each contribute to the S-adenosyl-L-methionine site. Asp-2652 functions as the For 2'-O-MTase activity in the catalytic mechanism. S-adenosyl-L-methionine is bound at residue Ile-2653. Residues Lys-2688 and Glu-2724 each act as for 2'-O-MTase activity in the active site. Tyr-2726 lines the S-adenosyl-L-methionine pocket. Positions 2878–2911 (RKIMKVVNRWLFRHLAREKNPRLCTKEEFIAKVR) match the Nuclear localization signal motif. Positions 2945, 2949, 2954, and 2957 each coordinate Zn(2+). Residues 3035-3187 (GGFYADDTAG…RPIDDRFGLA (153 aa)) form the RdRp catalytic domain. Residues His-3222, Cys-3238, and Cys-3357 each coordinate Zn(2+).

It in the N-terminal section; belongs to the class I-like SAM-binding methyltransferase superfamily. mRNA cap 0-1 NS5-type methyltransferase family. Homodimer. Interacts (via N-terminus) with host EXOC1 (via C-terminus); this interaction results in EXOC1 degradation through the proteasome degradation pathway. As to quaternary structure, forms heterodimers with envelope protein E in the endoplasmic reticulum and Golgi. In terms of assembly, homodimer; in the endoplasmic reticulum and Golgi. Interacts with protein prM. Interacts with non-structural protein 1. Homodimer; Homohexamer when secreted. Interacts with envelope protein E. As to quaternary structure, interacts (via N-terminus) with serine protease NS3. In terms of assembly, forms a heterodimer with serine protease NS3. May form homooligomers. Forms a heterodimer with NS2B. Interacts with non-structural protein 2A (via N-terminus). Interacts with NS4B. Interacts with unphosphorylated RNA-directed RNA polymerase NS5; this interaction stimulates RNA-directed RNA polymerase NS5 guanylyltransferase activity. NS3 interacts with host PDCD6IP; this interaction contributes to virion release. As to quaternary structure, interacts with serine protease NS3. In terms of assembly, homodimer. Interacts with host STAT2; this interaction prevents the establishment of cellular antiviral state. Interacts with serine protease NS3. Interacts with host TRIM23; this interaction leads to NS5 ubiquitination. In terms of processing, specific enzymatic cleavages in vivo yield mature proteins. The nascent capsid protein C contains a C-terminal hydrophobic domain that act as a signal sequence for translocation of prM into the lumen of the ER. Mature capsid protein C is cleaved at a site upstream of this hydrophobic domain by NS3. prM is cleaved in post-Golgi vesicles by a host furin, releasing the mature small envelope protein M, and peptide pr. Non-structural protein 2A-alpha, a C-terminally truncated form of non-structural protein 2A, results from partial cleavage by NS3. Specific enzymatic cleavages in vivo yield mature proteins peptide 2K acts as a signal sequence and is removed from the N-terminus of NS4B by the host signal peptidase in the ER lumen. Signal cleavage at the 2K-4B site requires a prior NS3 protease-mediated cleavage at the 4A-2K site. Cleaved in post-Golgi vesicles by a host furin, releasing the mature small envelope protein M, and peptide pr. This cleavage is incomplete as up to 30% of viral particles still carry uncleaved prM. Post-translationally, N-glycosylated. In terms of processing, N-glycosylated. The excreted form is glycosylated and this is required for efficient secretion of the protein from infected cells. Polyubiquitinated; ubiquitination is probably mediated by host TRIM23 and is prerequisite for NS5-STAT2 interaction. NS5 is not ISGylated or sumoylated. Post-translationally, phosphorylated on serines residues. This phosphorylation may trigger NS5 nuclear localization. In terms of processing, acetylated by host KAT5. Acetylation modulates NS3 RNA-binding and -unwinding activities and plays an important role for viral replication.

The protein resides in the virion. The protein localises to the host nucleus. It is found in the host cytoplasm. It localises to the host perinuclear region. Its subcellular location is the secreted. The protein resides in the virion membrane. The protein localises to the host endoplasmic reticulum membrane. The enzyme catalyses Selective hydrolysis of -Xaa-Xaa-|-Yaa- bonds in which each of the Xaa can be either Arg or Lys and Yaa can be either Ser or Ala.. The catalysed reaction is RNA(n) + a ribonucleoside 5'-triphosphate = RNA(n+1) + diphosphate. It carries out the reaction a ribonucleoside 5'-triphosphate + H2O = a ribonucleoside 5'-diphosphate + phosphate + H(+). It catalyses the reaction ATP + H2O = ADP + phosphate + H(+). The enzyme catalyses a 5'-end (5'-triphosphoguanosine)-ribonucleoside in mRNA + S-adenosyl-L-methionine = a 5'-end (N(7)-methyl 5'-triphosphoguanosine)-ribonucleoside in mRNA + S-adenosyl-L-homocysteine. The catalysed reaction is a 5'-end (N(7)-methyl 5'-triphosphoguanosine)-ribonucleoside in mRNA + S-adenosyl-L-methionine = a 5'-end (N(7)-methyl 5'-triphosphoguanosine)-(2'-O-methyl-ribonucleoside) in mRNA + S-adenosyl-L-homocysteine + H(+). Plays a role in virus budding by binding to the cell membrane and gathering the viral RNA into a nucleocapsid that forms the core of a mature virus particle. During virus entry, may induce genome penetration into the host cytoplasm after hemifusion induced by the surface proteins. Can migrate to the cell nucleus where it modulates host functions. In terms of biological role, inhibits RNA silencing by interfering with host Dicer. Functionally, prevents premature fusion activity of envelope proteins in trans-Golgi by binding to envelope protein E at pH6.0. After virion release in extracellular space, gets dissociated from E dimers. Its function is as follows. Acts as a chaperone for envelope protein E during intracellular virion assembly by masking and inactivating envelope protein E fusion peptide. prM is the only viral peptide matured by host furin in the trans-Golgi network probably to avoid catastrophic activation of the viral fusion activity in acidic Golgi compartment prior to virion release. prM-E cleavage is inefficient, and many virions are only partially matured. These uncleaved prM would play a role in immune evasion. May play a role in virus budding. Exerts cytotoxic effects by activating a mitochondrial apoptotic pathway through M ectodomain. May display a viroporin activity. In terms of biological role, binds to host cell surface receptor and mediates fusion between viral and cellular membranes. Envelope protein is synthesized in the endoplasmic reticulum in the form of heterodimer with protein prM. They play a role in virion budding in the ER, and the newly formed immature particle is covered with 60 spikes composed of heterodimer between precursor prM and envelope protein E. The virion is transported to the Golgi apparatus where the low pH causes dissociation of PrM-E heterodimers and formation of E homodimers. prM-E cleavage is inefficient, and many virions are only partially matured. These uncleaved prM would play a role in immune evasion. Functionally, involved in immune evasion, pathogenesis and viral replication. Once cleaved off the polyprotein, is targeted to three destinations: the viral replication cycle, the plasma membrane and the extracellular compartment. Essential for viral replication. Required for formation of the replication complex and recruitment of other non-structural proteins to the ER-derived membrane structures. Excreted as a hexameric lipoparticle that plays a role against host immune response. Antagonizing the complement function. Binds to the host macrophages and dendritic cells. Inhibits signal transduction originating from Toll-like receptor 3 (TLR3). Its function is as follows. Component of the viral RNA replication complex that functions in virion assembly and antagonizes the host immune response. Required cofactor for the serine protease function of NS3. May have membrane-destabilizing activity and form viroporins. In terms of biological role, displays three enzymatic activities: serine protease, NTPase and RNA helicase. NS3 serine protease, in association with NS2B, performs its autocleavage and cleaves the polyprotein at dibasic sites in the cytoplasm: C-prM, NS2A-NS2B, NS2B-NS3, NS3-NS4A, NS4A-2K and NS4B-NS5. NS3 RNA helicase binds RNA and unwinds dsRNA in the 3' to 5' direction. Also plays a role in virus assembly. Functionally, regulates the ATPase activity of the NS3 helicase activity. NS4A allows NS3 helicase to conserve energy during unwinding. Its function is as follows. Functions as a signal peptide for NS4B and is required for the interferon antagonism activity of the latter. Induces the formation of ER-derived membrane vesicles where the viral replication takes place. Inhibits interferon (IFN)-induced host STAT1 phosphorylation and nuclear translocation, thereby preventing the establishment of cellular antiviral state by blocking the IFN-alpha/beta pathway. In terms of biological role, replicates the viral (+) and (-) RNA genome, and performs the capping of genomes in the cytoplasm. NS5 methylates viral RNA cap at guanine N-7 and ribose 2'-O positions. Besides its role in RNA genome replication, also prevents the establishment of cellular antiviral state by blocking the interferon-alpha/beta (IFN-alpha/beta) signaling pathway. IFN-I induces binding of NS5 to host IFN-activated transcription factor STAT2, preventing its transcriptional activity. Host TRIM23 is the E3 ligase that interacts with and polyubiquitinates NS5 to promote its binding to STAT2 and trigger IFN-I signaling inhibition. This chain is Genome polyprotein, found in Yellow fever virus (strain French neurotropic vaccine FNV) (YFV).